Here is a 197-residue protein sequence, read N- to C-terminus: Rac-like GTP-binding protein RHO1 (197 aa).

Gly13–Thr20 contacts GTP. Positions Tyr35–Phe43 match the Effector region motif. Residues Asp60–Gln64 and Thr118–Asp121 contribute to the GTP site. Position 194 is a cysteine methyl ester (Cys194). Residue Cys194 is the site of S-geranylgeranyl cysteine attachment. Positions Ser195 to Leu197 are cleaved as a propeptide — removed in mature form.

This sequence belongs to the small GTPase superfamily. Rho family.

It localises to the cytoplasm. The protein localises to the membrane. Functionally, inactive GDP-bound Rho GTPases reside in the cytosol, are found in a complex with Rho GDP-dissociation inhibitors (Rho GDIs), and are released from the GDI protein in order to translocate to membranes upon activation. The sequence is that of Rac-like GTP-binding protein RHO1 (RHO1) from Beta vulgaris (Sugar beet).